Reading from the N-terminus, the 1192-residue chain is Probable ATP-dependent RNA helicase kurz (1192 aa).

Residues 170-214 are disordered; sequence ELQAKRKNPNVISVEEDDEDSSSSDEDDEEAPAQSAPIAIPTPVS. Positions 183–200 are enriched in acidic residues; it reads VEEDDEDSSSSDEDDEEA. Residues 270–436 enclose the Helicase ATP-binding domain; the sequence is METINENPIV…TRLFKIPPPL (167 aa). Position 283–290 (283–290) interacts with ATP; it reads GETGSGKT. Residues 379–382 carry the DEAH box motif; it reads DEAH. The tract at residues 504–529 is disordered; the sequence is APTKDVAKNGKVSEEEKEETIDDAAS. Residues 505–517 show a composition bias toward basic and acidic residues; the sequence is PTKDVAKNGKVSE. A Phosphoserine modification is found at S529. The residue at position 530 (T530) is a Phosphothreonine. Residues 540-746 form the Helicase C-terminal domain; the sequence is DMKRVIRNIR…DLMLQMRCMG (207 aa). Residues 567-583 are compositionally biased toward basic and acidic residues; the sequence is DDYKLPGDDTEADMHEQ. Residues 567-612 are disordered; it reads DDYKLPGDDTEADMHEQPDEDDEQEGLEEDNDDELGLEDESGMGSG. The span at 584 to 607 shows a compositional bias: acidic residues; the sequence is PDEDDEQEGLEEDNDDELGLEDES.

This sequence belongs to the DEAD box helicase family. DEAH subfamily.

It catalyses the reaction ATP + H2O = ADP + phosphate + H(+). In Drosophila melanogaster (Fruit fly), this protein is Probable ATP-dependent RNA helicase kurz (kz).